The sequence spans 494 residues: Alpha-amylase-related protein (494 aa).

A signal peptide spans 1–20 (MIKFALALTLCLAGASLSLA). Pyrrolidone carboxylic acid is present on Gln21. Cysteines 48 and 104 form a disulfide. Ca(2+)-binding residues include Asn118, Gln169, and Asp178. A disulfide bridge connects residues Cys157 and Cys171. Chloride is bound at residue Arg206. Residue Asp208 is the Nucleophile of the active site. His212 provides a ligand contact to Ca(2+). Glu245 acts as the Proton donor in catalysis. Positions 308 and 343 each coordinate chloride. Intrachain disulfides connect Cys376-Cys382, Cys418-Cys441, and Cys448-Cys460.

This sequence belongs to the glycosyl hydrolase 13 family. Monomer. Requires Ca(2+) as cofactor. Chloride is required as a cofactor.

Its subcellular location is the secreted. The enzyme catalyses Endohydrolysis of (1-&gt;4)-alpha-D-glucosidic linkages in polysaccharides containing three or more (1-&gt;4)-alpha-linked D-glucose units.. This chain is Alpha-amylase-related protein (Amyrel), found in Drosophila auraria (Fruit fly).